Here is a 515-residue protein sequence, read N- to C-terminus: Bifunctional purine biosynthesis protein PurH (515 aa).

Residues 1 to 145 enclose the MGS-like domain; that stretch reads MTKRVLISVS…KNHASVTVVV (145 aa).

Belongs to the PurH family.

The enzyme catalyses (6R)-10-formyltetrahydrofolate + 5-amino-1-(5-phospho-beta-D-ribosyl)imidazole-4-carboxamide = 5-formamido-1-(5-phospho-D-ribosyl)imidazole-4-carboxamide + (6S)-5,6,7,8-tetrahydrofolate. It carries out the reaction IMP + H2O = 5-formamido-1-(5-phospho-D-ribosyl)imidazole-4-carboxamide. The protein operates within purine metabolism; IMP biosynthesis via de novo pathway; 5-formamido-1-(5-phospho-D-ribosyl)imidazole-4-carboxamide from 5-amino-1-(5-phospho-D-ribosyl)imidazole-4-carboxamide (10-formyl THF route): step 1/1. It functions in the pathway purine metabolism; IMP biosynthesis via de novo pathway; IMP from 5-formamido-1-(5-phospho-D-ribosyl)imidazole-4-carboxamide: step 1/1. This is Bifunctional purine biosynthesis protein PurH from Streptococcus pneumoniae (strain 70585).